The sequence spans 268 residues: Bis(5'-nucleosyl)-tetraphosphatase, symmetrical (268 aa).

This sequence belongs to the Ap4A hydrolase family.

The enzyme catalyses P(1),P(4)-bis(5'-adenosyl) tetraphosphate + H2O = 2 ADP + 2 H(+). Its function is as follows. Hydrolyzes diadenosine 5',5'''-P1,P4-tetraphosphate to yield ADP. In Nitrosomonas europaea (strain ATCC 19718 / CIP 103999 / KCTC 2705 / NBRC 14298), this protein is Bis(5'-nucleosyl)-tetraphosphatase, symmetrical.